The chain runs to 191 residues: dCTP deaminase (191 aa).

Residues 112 to 117, 136 to 138, Gln157, Tyr173, and Gln183 contribute to the dCTP site; these read KSTYAR and TLE. Glu138 serves as the catalytic Proton donor/acceptor.

This sequence belongs to the dCTP deaminase family. In terms of assembly, homotrimer.

The catalysed reaction is dCTP + H2O + H(+) = dUTP + NH4(+). It functions in the pathway pyrimidine metabolism; dUMP biosynthesis; dUMP from dCTP (dUTP route): step 1/2. In terms of biological role, catalyzes the deamination of dCTP to dUTP. The chain is dCTP deaminase from Xylella fastidiosa (strain M12).